We begin with the raw amino-acid sequence, 808 residues long: Genome polyprotein (808 aa).

A disordered region spans residues threonine 34–lysine 55. 2 short sequence motifs ((L)YPX(n)L motif) span residues tyrosine 146–leucine 150 and tyrosine 179–leucine 184.

Belongs to the picornaviridae polyprotein family. As to quaternary structure, homopentamer. Homooligomer. Interacts with capsid protein VP2. Interacts with capsid protein VP3. In terms of assembly, interacts with capsid protein VP1. Interacts with capsid protein VP3. As to quaternary structure, interacts with capsid protein VP1. Interacts with capsid protein VP2. Specific enzymatic cleavages by viral protease in vivo yield a variety of precursors and mature proteins. Polyprotein processing intermediates are produced, such as P1-2A which is a functional precursor of the structural proteins, VP0 which is a VP4-VP2 precursor, VP1-2A precursor, 3ABC precursor which is a stable and catalytically active precursor of 3A, 3B and 3C proteins, 3AB and 3CD precursors. The assembly signal 2A is removed from VP1-2A by a host protease, possibly host Cathepsin L. This cleavage occurs over a region of 3 amino-acids probably generating VP1 proteins with heterogeneous C-termini. Post-translationally, during virion maturation, immature virions are rendered infectious following cleavage of VP0 into VP4 and VP2. This maturation seems to be an autocatalytic event triggered by the presence of RNA in the capsid and is followed by a conformational change of the particle. In terms of processing, the assembly signal 2A is removed from VP1-2A by a host protease, possibly host Cathepsin L in naked virions. This cleavage does not occur in enveloped virions. This cleavage occurs over a region of 3 amino-acids probably generating VP1 proteins with heterogeneous C-termini. Unlike other picornaviruses, does not seem to be myristoylated.

The protein resides in the virion. The protein localises to the host endosome. Its subcellular location is the host multivesicular body. Functionally, capsid proteins VP1, VP2, and VP3 form a closed capsid enclosing the viral positive strand RNA genome. All these proteins contain a beta-sheet structure called beta-barrel jelly roll. Together they form an icosahedral capsid (T=3) composed of 60 copies of each VP1, VP2, and VP3, with a diameter of approximately 300 Angstroms. VP1 is situated at the 12 fivefold axes, whereas VP2 and VP3 are located at the quasi-sixfold axes. The naked capsid interacts with the host receptor HAVCR1 to provide virion attachment to and probably entry into the target cell. In terms of biological role, VP0 precursor is a component of the immature procapsids. Its function is as follows. Plays a role in the assembly of the 12 pentamers into an icosahedral structure. Has not been detected in mature virions, supposedly owing to its small size. Precursor component of immature procapsids that corresponds to an extended form of the structural protein VP1. After maturation, possibly by the host Cathepsin L, the assembly signal 2A is cleaved to give rise to the mature VP1 protein. This chain is Genome polyprotein, found in Human hepatitis A virus genotype IIIA (isolate GA76) (HHAV).